Consider the following 1331-residue polypeptide: Contactin-associated protein-like 2 (1331 aa).

Residues 1-27 form the signal peptide; it reads MQAAPRAGCGAALLLWIVSSCLCRAWT. Residues 28–1262 are Extracellular-facing; the sequence is APSTSQKCDE…IRNGVNRNSA (1235 aa). The F5/8 type C domain maps to 35 to 181; it reads CDEPLVSGLP…IGLRIEVYGC (147 aa). A disulfide bond links cysteine 35 and cysteine 181. The Laminin G-like 1 domain occupies 216–368; sequence FKTSESEGVI…SNVGNLSFSC (153 aa). Residues asparagine 289, asparagine 346, asparagine 363, asparagine 379, asparagine 436, asparagine 506, asparagine 507, and asparagine 546 are each glycosylated (N-linked (GlcNAc...) asparagine). An intrachain disulfide couples cysteine 336 to cysteine 368. One can recognise a Laminin G-like 2 domain in the interval 401 to 552; the sequence is FRTWNPNGLL…SFANVSIDMC (152 aa). Cystine bridges form between cysteine 520-cysteine 552, cysteine 558-cysteine 569, cysteine 563-cysteine 578, and cysteine 580-cysteine 590. In terms of domain architecture, EGF-like 1 spans 554–591; it reads IIDRCVPNHCEHGGKCSQTWDSFKCTCDETGYSGATCH. The Fibrinogen C-terminal domain maps to 592–798; sequence NSIYEPSCEA…LRCQGDRNYW (207 aa). Asparagine 630 and asparagine 735 each carry an N-linked (GlcNAc...) asparagine glycan. In terms of domain architecture, Laminin G-like 3 spans 799–963; sequence NAASFPNPSS…KVTSGFISGC (165 aa). Intrachain disulfides connect cysteine 936-cysteine 963, cysteine 967-cysteine 980, cysteine 974-cysteine 989, and cysteine 991-cysteine 1001. One can recognise an EGF-like 2 domain in the interval 963–1002; it reads CSGHCTSYGTNCENGGKCLERYHGYSCDCSNTAYDGTFCN. Positions 1026-1045 are disordered; sequence ARDSSSRVDNAPDQQNSHPD. The region spanning 1055-1214 is the Laminin G-like 4 domain; the sequence is FSTTKAPCIL…IQGELVESNC (160 aa). Residues asparagine 1116 and asparagine 1198 are each glycosylated (N-linked (GlcNAc...) asparagine). Cysteine 1178 and cysteine 1214 are disulfide-bonded. The helical transmembrane segment at 1263–1283 threads the bilayer; that stretch reads IIGGVIAVVIFTILCTLVFLI. Residues 1284-1331 lie on the Cytoplasmic side of the membrane; it reads RYMFRHKGTYHTNEAKGAESAESADAAIMNNDPNFTETIDESKKEWLI. Residues serine 1303 and serine 1306 each carry the phosphoserine modification.

This sequence belongs to the neurexin family. As to quaternary structure, interacts (via C-terminus) with KCNA2. Interacts with GPR37. In terms of tissue distribution, predominantly expressed in nervous system.

It is found in the membrane. The protein localises to the cell projection. Its subcellular location is the axon. It localises to the cell junction. The protein resides in the paranodal septate junction. In terms of biological role, required for gap junction formation. Required, with CNTNAP1, for radial and longitudinal organization of myelinated axons. Plays a role in the formation of functional distinct domains critical for saltatory conduction of nerve impulses in myelinated nerve fibers. Demarcates the juxtaparanodal region of the axo-glial junction. The chain is Contactin-associated protein-like 2 (CNTNAP2) from Homo sapiens (Human).